The chain runs to 476 residues: Bifunctional protein HldE (476 aa).

The ribokinase stretch occupies residues Met1–Thr318. Asn195–Glu198 contacts ATP. The active site involves Asp264. Residues Met344 to Gly476 form a cytidylyltransferase region.

In the N-terminal section; belongs to the carbohydrate kinase PfkB family. It in the C-terminal section; belongs to the cytidylyltransferase family. Homodimer.

It catalyses the reaction D-glycero-beta-D-manno-heptose 7-phosphate + ATP = D-glycero-beta-D-manno-heptose 1,7-bisphosphate + ADP + H(+). The enzyme catalyses D-glycero-beta-D-manno-heptose 1-phosphate + ATP + H(+) = ADP-D-glycero-beta-D-manno-heptose + diphosphate. It functions in the pathway nucleotide-sugar biosynthesis; ADP-L-glycero-beta-D-manno-heptose biosynthesis; ADP-L-glycero-beta-D-manno-heptose from D-glycero-beta-D-manno-heptose 7-phosphate: step 1/4. It participates in nucleotide-sugar biosynthesis; ADP-L-glycero-beta-D-manno-heptose biosynthesis; ADP-L-glycero-beta-D-manno-heptose from D-glycero-beta-D-manno-heptose 7-phosphate: step 3/4. Functionally, catalyzes the phosphorylation of D-glycero-D-manno-heptose 7-phosphate at the C-1 position to selectively form D-glycero-beta-D-manno-heptose-1,7-bisphosphate. In terms of biological role, catalyzes the ADP transfer from ATP to D-glycero-beta-D-manno-heptose 1-phosphate, yielding ADP-D-glycero-beta-D-manno-heptose. The chain is Bifunctional protein HldE from Vibrio cholerae serotype O1 (strain M66-2).